A 172-amino-acid polypeptide reads, in one-letter code: Peptide deformylase 1 (172 aa).

Residues Cys-91 and His-133 each contribute to the Fe cation site. The active site involves Glu-134. Fe cation is bound at residue His-137.

This sequence belongs to the polypeptide deformylase family. The cofactor is Fe(2+).

The enzyme catalyses N-terminal N-formyl-L-methionyl-[peptide] + H2O = N-terminal L-methionyl-[peptide] + formate. In terms of biological role, removes the formyl group from the N-terminal Met of newly synthesized proteins. Requires at least a dipeptide for an efficient rate of reaction. N-terminal L-methionine is a prerequisite for activity but the enzyme has broad specificity at other positions. The chain is Peptide deformylase 1 from Vibrio parahaemolyticus serotype O3:K6 (strain RIMD 2210633).